The chain runs to 457 residues: Solute carrier family 38 member 6 (457 aa).

Residue Met-1 is modified to N-acetylmethionine. Residues Ser-4 and Ser-7 each carry the phosphoserine modification. Transmembrane regions (helical) follow at residues 48 to 68 (FGLS…LGLA), 70 to 90 (VMAN…ALLA), 112 to 132 (LGLF…IIIQ), 171 to 191 (LLII…KIGF), and 192 to 212 (LGYT…VVVI). Cys-219 and Cys-239 form a disulfide bridge. The N-linked (GlcNAc...) asparagine glycan is linked to Asn-234. Residues 251–271 (VYAIPTMAFSFLCHTSVLPIY) traverse the membrane as a helical segment. Residue Asn-284 is glycosylated (N-linked (GlcNAc...) asparagine). Helical transmembrane passes span 289–309 (AIAL…LTFY), 328–348 (AAVM…VPLI), 372–392 (SLTT…VPDI), 395–415 (VFGV…PGLF), and 432–452 (ALSL…LIIL).

The protein belongs to the amino acid/polyamine transporter 2 family.

The protein resides in the cell membrane. It is found in the synapse. The enzyme catalyses L-glutamine(out) = L-glutamine(in). It catalyses the reaction L-glutamate(out) = L-glutamate(in). Its function is as follows. Amino acid transporter with an apparent selectivity for L-glutamine and L-glutamate. May facilitate glutamine uptake in excitatory neurons. The transport mechanism remains to be elucidated. The chain is Solute carrier family 38 member 6 from Rattus norvegicus (Rat).